A 366-amino-acid polypeptide reads, in one-letter code: MSSPVSLENAASTSNKRVVAFHELPSPTDLIAANPLTPKQASKVEQDRQDIADIFAGDDDRLVVVVGPCSVHDPEAAIDYANRLAPLAKRLDQDLKIVMRVYFEKPRTIVGWKGLINDPHLNETYDIPEGLRIARKVLIDVVNLDLPVGCEFLEPNSPQYYADTVAWGAIGARTTESQVHRQLASGMSMPIGFKNGTDGNIQVAVDAVQAAQNPHFFFGTSDDGALSVVETAGNSNSHIILRGGTSGPNHDAASVEAVVEKLGENARLMIDASHANSGKDHIRQVEVVREIAEQISGGSEAVAGIMIESFLVGGAQNLDPAKLRINGGEGLVYGQSVTDKCIDIDTTIDLLAELAAAVRERRAAAK.

This sequence belongs to the class-I DAHP synthase family.

The enzyme catalyses D-erythrose 4-phosphate + phosphoenolpyruvate + H2O = 7-phospho-2-dehydro-3-deoxy-D-arabino-heptonate + phosphate. It participates in metabolic intermediate biosynthesis; chorismate biosynthesis; chorismate from D-erythrose 4-phosphate and phosphoenolpyruvate: step 1/7. Functionally, stereospecific condensation of phosphoenolpyruvate (PEP) and D-erythrose-4-phosphate (E4P) giving rise to 3-deoxy-D-arabino-heptulosonate-7-phosphate (DAHP). In Corynebacterium glutamicum (strain ATCC 13032 / DSM 20300 / JCM 1318 / BCRC 11384 / CCUG 27702 / LMG 3730 / NBRC 12168 / NCIMB 10025 / NRRL B-2784 / 534), this protein is Phospho-2-dehydro-3-deoxyheptonate aldolase (aroG).